Here is a 119-residue protein sequence, read N- to C-terminus: Large ribosomal subunit protein bL20 (119 aa).

This sequence belongs to the bacterial ribosomal protein bL20 family.

Its function is as follows. Binds directly to 23S ribosomal RNA and is necessary for the in vitro assembly process of the 50S ribosomal subunit. It is not involved in the protein synthesizing functions of that subunit. The sequence is that of Large ribosomal subunit protein bL20 from Nitrosomonas eutropha (strain DSM 101675 / C91 / Nm57).